Here is a 781-residue protein sequence, read N- to C-terminus: Cation channel sperm-associated auxiliary subunit delta (781 aa).

The first 20 residues, 1–20 (MLVLMLVVATTFRLCPLVKA), serve as a signal peptide directing secretion. Residues 21–725 (RPLCRIRTLR…YGAFPLSIFP (705 aa)) lie on the Extracellular side of the membrane. 7 cysteine pairs are disulfide-bonded: cysteine 24-cysteine 370, cysteine 60-cysteine 146, cysteine 145-cysteine 153, cysteine 388-cysteine 497, cysteine 511-cysteine 705, cysteine 526-cysteine 573, and cysteine 625-cysteine 655. N-linked (GlcNAc...) asparagine glycans are attached at residues asparagine 231, asparagine 294, asparagine 458, asparagine 473, asparagine 539, and asparagine 631. A helical membrane pass occupies residues 726-749 (PEITIVLLTAATLLSIWLAYMIPQ). At 750-781 (LLHTEQGLEGNGFWVRLYQRCRKSCACLWGRC) the chain is on the cytoplasmic side.

Belongs to the CATSPERD family. In terms of assembly, component of the CatSper complex or CatSpermasome composed of the core pore-forming members CATSPER1, CATSPER2, CATSPER3 and CATSPER4 as well as auxiliary members CATSPERB, CATSPERG, CATSPERD, CATSPERE, CATSPERZ, C2CD6/CATSPERT, TMEM249, TMEM262 and EFCAB9. HSPA1 may be an additional auxiliary complex member. The core complex members CATSPER1, CATSPER2, CATSPER3 and CATSPER4 form a heterotetrameric channel. The auxiliary CATSPERB, CATSPERG, CATSPERD and CATSPERE subunits form a pavilion-like structure over the pore which stabilizes the complex through interactions with CATSPER4, CATSPER3, CATSPER1 and CATSPER2 respectively. TMEM262/CATSPERH interacts with CATSPERB, further stabilizing the complex. C2CD6/CATSPERT interacts at least with CATSPERD and is required for targeting the CatSper complex in the flagellar membrane.

Its subcellular location is the cell projection. The protein localises to the cilium. It localises to the flagellum membrane. In terms of biological role, auxiliary component of the CatSper complex, a complex involved in sperm cell hyperactivation. Sperm cell hyperactivation is needed for sperm motility which is essential late in the preparation of sperm for fertilization. Required for CATSPER1 stability before intraflagellar transport and/or incorporation of the CatSper complex channel into the flagellar membrane. The protein is Cation channel sperm-associated auxiliary subunit delta of Bos taurus (Bovine).